A 135-amino-acid polypeptide reads, in one-letter code: Large ribosomal subunit protein uL16c (135 aa).

The disordered stretch occupies residues 1–20 (MLSPKRTRFRKQHRGRMKGK).

Belongs to the universal ribosomal protein uL16 family. In terms of assembly, part of the 50S ribosomal subunit.

It localises to the plastid. Its subcellular location is the chloroplast. This is Large ribosomal subunit protein uL16c from Landoltia punctata (Dotted duckmeat).